The chain runs to 507 residues: Cytochrome P450 monooxygenase cloA (507 aa).

A helical transmembrane segment spans residues Trp15 to Ile35. N-linked (GlcNAc...) asparagine glycosylation is present at Asn247. Residue Cys450 participates in heme binding.

Belongs to the cytochrome P450 family. Heme is required as a cofactor.

It is found in the membrane. It participates in alkaloid biosynthesis; ergot alkaloid biosynthesis. Cytochrome P450 monooxygenase; part of the gene cluster that mediates the biosynthesis of fungal ergot alkaloid. DmaW catalyzes the first step of ergot alkaloid biosynthesis by condensing dimethylallyl diphosphate (DMAP) and tryptophan to form 4-dimethylallyl-L-tryptophan. The second step is catalyzed by the methyltransferase easF that methylates 4-dimethylallyl-L-tryptophan in the presence of S-adenosyl-L-methionine, resulting in the formation of 4-dimethylallyl-L-abrine. The catalase easC and the FAD-dependent oxidoreductase easE then transform 4-dimethylallyl-L-abrine to chanoclavine-I which is further oxidized by easD in the presence of NAD(+), resulting in the formation of chanoclavine-I aldehyde. Agroclavine dehydrogenase easG then mediates the conversion of chanoclavine-I aldehyde to agroclavine via a non-enzymatic adduct reaction: the substrate is an iminium intermediate that is formed spontaneously from chanoclavine-I aldehyde in the presence of glutathione. The presence of easA is not required to complete this reaction. Further conversion of agroclavine to paspalic acid is a two-step process involving oxidation of agroclavine to elymoclavine and of elymoclavine to paspalic acid, the second step being performed by the elymoclavine oxidase cloA. Paspalic acid is then further converted to D-lysergic acid. Ergopeptines are assembled from D-lysergic acid and three different amino acids by the D-lysergyl-peptide-synthetases composed each of a monomudular and a trimodular nonribosomal peptide synthetase subunit. LpsB and lpsC encode the monomodular subunits responsible for D-lysergic acid activation and incorporation into the ergopeptine backbone. LpsA1 and A2 subunits encode the trimodular nonribosomal peptide synthetase assembling the tripeptide portion of ergopeptines. LpsA1 is responsible for formation of the major ergopeptine, ergotamine, and lpsA2 for alpha-ergocryptine, the minor ergopeptine of the total alkaloid mixture elaborated by C.purpurea. D-lysergyl-tripeptides are assembled by the nonribosomal peptide synthetases and released as N-(D-lysergyl-aminoacyl)-lactams. Cyclolization of the D-lysergyl-tripeptides is performed by the Fe(2+)/2-ketoglutarate-dependent dioxygenase easH which introduces a hydroxyl group into N-(D-lysergyl-aminoacyl)-lactam at alpha-C of the aminoacyl residue followed by spontaneous condensation with the terminal lactam carbonyl group. This is Cytochrome P450 monooxygenase cloA from Claviceps purpurea (strain 20.1) (Ergot fungus).